Reading from the N-terminus, the 289-residue chain is G1/S-specific cyclin-D2 (289 aa).

The Cyclin N-terminal domain maps to 26-151; the sequence is LQNLLTIEER…VLGKLKWNLA (126 aa). Positions 264–289 are disordered; sequence QHNAGSKSVEDPDQATTPTDVRDVDL. Residue S271 is modified to Phosphoserine. Residue T280 is modified to Phosphothreonine.

The protein belongs to the cyclin family. Cyclin D subfamily. As to quaternary structure, interacts with either CDK4 or CDK6 protein kinase to form a serine/threonine kinase holoenzyme complex. The cyclin subunit imparts substrate specificity to the complex. Phosphorylation at Thr-280 by MAP kinases is required for ubiquitination and degradation by the DCX(AMBRA1) complex. In terms of processing, ubiquitinated by the DCX(AMBRA1) complex during the transition from G1 to S cell phase, leading to its degradation: ubiquitination is dependent on Thr-280 phosphorylation. The DCX(AMBRA1) complex represents the major regulator of CCND2 stability during the G1/S transition. Polyubiquitinated by the SCF(FBXL2) complex, leading to proteasomal degradation.

The protein resides in the nucleus. It localises to the cytoplasm. The protein localises to the nucleus membrane. Functionally, regulatory component of the cyclin D2-CDK4 (DC) complex that phosphorylates and inhibits members of the retinoblastoma (RB) protein family including RB1 and regulates the cell-cycle during G(1)/S transition. Phosphorylation of RB1 allows dissociation of the transcription factor E2F from the RB/E2F complex and the subsequent transcription of E2F target genes which are responsible for the progression through the G(1) phase. Hypophosphorylates RB1 in early G(1) phase. Cyclin D-CDK4 complexes are major integrators of various mitogenenic and antimitogenic signals. The polypeptide is G1/S-specific cyclin-D2 (Mus musculus (Mouse)).